The primary structure comprises 1680 residues: RAF-like serine/threonine-protein kinase PRAF (1680 aa).

Residues 86 to 163 (FSPSDPHNSV…TPSDDGKDFP (78 aa)) are disordered. A PB1 domain is found at 166–267 (RVKFMCSFGG…SRLRVFLFPA (102 aa)). Disordered regions lie at residues 363-388 (LTGNLSNRSNAPSAPSSAPSSPPLLA), 417-516 (PQYT…DSQQ), 556-580 (PDMLQSSGAQPAVSGQQQQGYQPQQ), 594-613 (GANHEGAYRQGDQQQQSQQF), 641-672 (QSTSYHGSAPSSPRPGFRELPSRHLPGGPQLQ), 700-725 (RSFRLSSSPPRYRDHHPHSEERLHRQ), and 1186-1226 (LPNA…LGGQ). Positions 366–388 (NLSNRSNAPSAPSSAPSSPPLLA) are enriched in low complexity. Residues 446–482 (HEMHYRSTDSRRGPESPPKKFHDALHQDHPITVEQRR) show a composition bias toward basic and acidic residues. Low complexity-rich tracts occupy residues 560–580 (QSSGAQPAVSGQQQQGYQPQQ) and 603–613 (QGDQQQQSQQF). Over residues 641–651 (QSTSYHGSAPS) the composition is skewed to polar residues. Positions 1204-1217 (SRSSSSSLSELSKS) are enriched in low complexity. Phosphoserine is present on Ser-1248. The segment covering 1339–1354 (ASTVDKENQEEVRTGL) has biased composition (basic and acidic residues). Residues 1339–1372 (ASTVDKENQEEVRTGLDEPADEDKANSTGLGSDP) form a disordered region. Ser-1365 carries the post-translational modification Phosphoserine. Residues 1389–1655 (LEELRELGSG…SDIAKELRTM (267 aa)) form the Protein kinase domain. ATP contacts are provided by residues 1395-1403 (LGSGTFGTV) and Lys-1416. Asp-1518 (proton acceptor) is an active-site residue. The interval 1661–1680 (PKTQAQTQGQSHPHPQMQIV) is disordered.

The protein belongs to the protein kinase superfamily. Ser/Thr protein kinase family. Hyperphosphorylated in response to auxin. Its phosphorylation state is also rapidly stimulated by photosynthetic activity (e.g. in response to blue light and red light irradiation); dephosphorylated in the darkness.

The protein resides in the cytoplasm. It catalyses the reaction L-seryl-[protein] + ATP = O-phospho-L-seryl-[protein] + ADP + H(+). The enzyme catalyses L-threonyl-[protein] + ATP = O-phospho-L-threonyl-[protein] + ADP + H(+). Activated by auxin via rapid phosphorylation. Regulated by photosynthesis-activity-dependent changes in its phosphorylation status. Functionally, RAF-like protein kinase acting as a central mediator of a fast response pathway to auxin involving proteins phosphorylation, and leading to rapid cellular responses including membrane depolarization and cytoplasmic streaming. Required for general growth and developmental process. Photosynthesis signaling kinase involved in the regulation of the sucrose metabolism involving PGM1. Necessary for optimal chloroplast electron transport rate (ETR). This Marchantia polymorpha (Common liverwort) protein is RAF-like serine/threonine-protein kinase PRAF.